Reading from the N-terminus, the 51-residue chain is SPbeta prophage-derived uncharacterized protein YorQ (51 aa).

In Bacillus subtilis (strain 168), this protein is SPbeta prophage-derived uncharacterized protein YorQ (yorQ).